We begin with the raw amino-acid sequence, 249 residues long: uncharacterized protein (249 aa).

The segment covering 51 to 67 (IPKDSLTNGKSSKNCMS) has biased composition (polar residues). Disordered stretches follow at residues 51–131 (IPKD…DSPV) and 205–240 (YLNA…SSDG). The segment covering 93-106 (SFQSMNSSMSSSTQ) has biased composition (low complexity). Residues 110–129 (RILDEKNKDQSSSNENDRDS) show a composition bias toward basic and acidic residues.

It belongs to the asfivirus DP238L family.

This is an uncharacterized protein from African swine fever virus (isolate Tick/Malawi/Lil 20-1/1983) (ASFV).